Here is a 95-residue protein sequence, read N- to C-terminus: UPF0381 protein HI_0400 (95 aa).

Belongs to the UPF0381 family.

This is UPF0381 protein HI_0400 from Haemophilus influenzae (strain ATCC 51907 / DSM 11121 / KW20 / Rd).